The following is a 270-amino-acid chain: Glutamate racemase (270 aa).

Substrate contacts are provided by residues 7–8 (DS) and 39–40 (YG). The Proton donor/acceptor role is filled by cysteine 70. 71 to 72 (NT) is a substrate binding site. The active-site Proton donor/acceptor is cysteine 194. 195–196 (TH) is a substrate binding site.

Belongs to the aspartate/glutamate racemases family.

The catalysed reaction is L-glutamate = D-glutamate. It functions in the pathway cell wall biogenesis; peptidoglycan biosynthesis. In terms of biological role, provides the (R)-glutamate required for cell wall biosynthesis. This is Glutamate racemase from Cereibacter sphaeroides (strain ATCC 17023 / DSM 158 / JCM 6121 / CCUG 31486 / LMG 2827 / NBRC 12203 / NCIMB 8253 / ATH 2.4.1.) (Rhodobacter sphaeroides).